The sequence spans 277 residues: Putative hydro-lyase SCO1412 (277 aa).

Belongs to the D-glutamate cyclase family.

This is Putative hydro-lyase SCO1412 from Streptomyces coelicolor (strain ATCC BAA-471 / A3(2) / M145).